Consider the following 190-residue polypeptide: GTP cyclohydrolase 1 (190 aa).

The Zn(2+) site is built by Cys-80, His-83, and Cys-151.

This sequence belongs to the GTP cyclohydrolase I family. In terms of assembly, toroid-shaped homodecamer, composed of two pentamers of five dimers.

The enzyme catalyses GTP + H2O = 7,8-dihydroneopterin 3'-triphosphate + formate + H(+). The protein operates within cofactor biosynthesis; 7,8-dihydroneopterin triphosphate biosynthesis; 7,8-dihydroneopterin triphosphate from GTP: step 1/1. In Rickettsia prowazekii (strain Madrid E), this protein is GTP cyclohydrolase 1 (folE).